A 545-amino-acid chain; its full sequence is Metal transporter NRAT1 (545 aa).

A run of 12 helical transmembrane segments spans residues 51–71 (FLAH…PSNL), 84–104 (ELLW…TLAA), 128–148 (IFLW…EVLG), 155–175 (ILLK…TLLL), 188–208 (FIIA…LSYL), 234–254 (IALF…ALVL), 278–298 (LAFI…GSIC), 333–353 (VVYA…CTFA), 373–395 (LITR…PSGA), 398–418 (LIIL…IPLL), 437–457 (VVIA…FLVW), and 474–494 (GLIS…VVYL). Positions 516-545 (EAGGTPVVDASAADEDQPAPYRKDLADASM) are disordered. Basic and acidic residues predominate over residues 536-545 (YRKDLADASM).

It belongs to the NRAMP (TC 2.A.55) family. As to expression, expressed at low levels in roots.

It is found in the cell membrane. In terms of biological role, metal transporter that transports the trivalent cation aluminum (Al(3+)), but does not seem to transport divalent cations such as iron (Fe(2+)), manganese (Mg(2+)) or Cadmium (Cd(2+)). Involved in Al tolerance by taking up Al in root cells, where it is detoxified by chelation with organic acid anions and sequestration into the vacuoles. This Oryza sativa subsp. japonica (Rice) protein is Metal transporter NRAT1 (NRAT1).